We begin with the raw amino-acid sequence, 417 residues long: Voltage-gated ClC-type chloride channel ClcB (417 aa).

Transmembrane regions (helical) follow at residues 5–25 (LLIATLIGILAALAVAAFRHA), 54–74 (LITPALGGLAAGLLLWGWQKM), 146–166 (LWIASGAAAGMAGAYHAPLAG), 168–188 (LFIAEILFGTLMLASLGPVVV), 222–242 (VMIVSTGLVAGLCGPLLMWLM), 258–278 (WQLALGGLIVGLLSLLTPTVW), 288–308 (FLLSPPLFSLIGGIFACKILA), 316–336 (GAPGGVFTPTLFVGLSIGMFL), 349–371 (EIAILLGLAGMATLLAATTHAPI), and 380–400 (MTGEYQLLPGLLIACVVASVL).

It belongs to the chloride channel (TC 2.A.49) family. ClcB subfamily.

The protein resides in the cell inner membrane. Functionally, probably acts as an electrical shunt for an outwardly-directed proton pump that is linked to amino acid decarboxylation, as part of the extreme acid resistance (XAR) response. The polypeptide is Voltage-gated ClC-type chloride channel ClcB (Salmonella dublin (strain CT_02021853)).